Consider the following 392-residue polypeptide: ATP phosphoribosyltransferase regulatory subunit (392 aa).

The protein belongs to the class-II aminoacyl-tRNA synthetase family. HisZ subfamily. As to quaternary structure, heteromultimer composed of HisG and HisZ subunits.

It is found in the cytoplasm. It participates in amino-acid biosynthesis; L-histidine biosynthesis; L-histidine from 5-phospho-alpha-D-ribose 1-diphosphate: step 1/9. Functionally, required for the first step of histidine biosynthesis. May allow the feedback regulation of ATP phosphoribosyltransferase activity by histidine. The chain is ATP phosphoribosyltransferase regulatory subunit from Prochlorococcus marinus (strain MIT 9313).